A 127-amino-acid polypeptide reads, in one-letter code: Large ribosomal subunit protein uL24 (127 aa).

It belongs to the universal ribosomal protein uL24 family. In terms of assembly, component of the large ribosomal subunit. Mature ribosomes consist of a small (40S) and a large (60S) subunit. The 40S subunit contains about 32 different proteins and 1 molecule of RNA (18S). The 60S subunit contains 45 different proteins and 3 molecules of RNA (25S, 5.8S and 5S).

The protein localises to the cytoplasm. In terms of biological role, component of the ribosome, a large ribonucleoprotein complex responsible for the synthesis of proteins in the cell. The small ribosomal subunit (SSU) binds messenger RNAs (mRNAs) and translates the encoded message by selecting cognate aminoacyl-transfer RNA (tRNA) molecules. The large subunit (LSU) contains the ribosomal catalytic site termed the peptidyl transferase center (PTC), which catalyzes the formation of peptide bonds, thereby polymerizing the amino acids delivered by tRNAs into a polypeptide chain. The nascent polypeptides leave the ribosome through a tunnel in the LSU and interact with protein factors that function in enzymatic processing, targeting, and the membrane insertion of nascent chains at the exit of the ribosomal tunnel. This chain is Large ribosomal subunit protein uL24, found in Candida albicans (strain SC5314 / ATCC MYA-2876) (Yeast).